The following is a 339-amino-acid chain: UDP-N-acetylenolpyruvoylglucosamine reductase (339 aa).

The 171-residue stretch at 19-189 folds into the FAD-binding PCMH-type domain; that stretch reads VDVQARLFAQ…LRVRFKLSRE (171 aa). Arg166 is an active-site residue. Ser239 acts as the Proton donor in catalysis. The active site involves Glu335.

This sequence belongs to the MurB family. FAD is required as a cofactor.

Its subcellular location is the cytoplasm. It catalyses the reaction UDP-N-acetyl-alpha-D-muramate + NADP(+) = UDP-N-acetyl-3-O-(1-carboxyvinyl)-alpha-D-glucosamine + NADPH + H(+). Its pathway is cell wall biogenesis; peptidoglycan biosynthesis. Cell wall formation. This is UDP-N-acetylenolpyruvoylglucosamine reductase from Pseudomonas syringae pv. tomato (strain ATCC BAA-871 / DC3000).